A 415-amino-acid polypeptide reads, in one-letter code: Fructose-like permease IIC component (415 aa).

The Cytoplasmic portion of the chain corresponds to M1 to M46. Residues L35 to L410 form the PTS EIIC type-2 domain. The chain crosses the membrane as a helical span at residues V47 to W67. Over L68 to S101 the chain is Periplasmic. Residues F102–I122 traverse the membrane as a helical segment. Topologically, residues G123–L126 are cytoplasmic. The helical transmembrane segment at A127–F147 threads the bilayer. Topologically, residues D148–S157 are periplasmic. A helical transmembrane segment spans residues S158–V178. The Cytoplasmic portion of the chain corresponds to K179–T197. The helical transmembrane segment at F198–P218 threads the bilayer. Over F219–K237 the chain is Periplasmic. Residues G238–I258 form a helical membrane-spanning segment. Over N259 to P276 the chain is Cytoplasmic. Residues V277 to I297 traverse the membrane as a helical segment. Over D298 to A318 the chain is Periplasmic. Residues M319–I339 form a helical membrane-spanning segment. At T340 to A341 the chain is on the cytoplasmic side. Residues I342 to V362 traverse the membrane as a helical segment. Over Q363–N378 the chain is Periplasmic. A helical membrane pass occupies residues L379–F399. The Cytoplasmic segment spans residues L400–L415.

It is found in the cell inner membrane. Its function is as follows. The phosphoenolpyruvate-dependent sugar phosphotransferase system (PTS), a major carbohydrate active -transport system, catalyzes the phosphorylation of incoming sugar substrates concomitant with their translocation across the cell membrane. The sequence is that of Fructose-like permease IIC component (fryC) from Escherichia coli O157:H7.